A 234-amino-acid chain; its full sequence is Interleukin-27 subunit alpha (234 aa).

The first 28 residues, M1–G28, serve as a signal peptide directing secretion. An N-linked (GlcNAc...) asparagine glycan is attached at N85. The tract at residues K160–G185 is disordered. Residues E161 to E174 show a composition bias toward acidic residues.

The protein belongs to the IL-6 superfamily. Heterodimer with EBI3; not disulfide-linked. This heterodimer is known as interleukin IL-27. O-glycosylated. As to expression, expressed in macrophages and dendritic cells.

It is found in the secreted. Associates with EBI3 to form the IL-27 interleukin, a heterodimeric cytokine which functions in innate immunity. IL-27 has pro- and anti-inflammatory properties, that can regulate T-helper cell development, suppress T-cell proliferation, stimulate cytotoxic T-cell activity, induce isotype switching in B-cells, and that has diverse effects on innate immune cells. Among its target cells are CD4 T-helper cells which can differentiate in type 1 effector cells (TH1), type 2 effector cells (TH2) and IL17 producing helper T-cells (TH17). It drives rapid clonal expansion of naive but not memory CD4 T-cells. It also strongly synergizes with IL-12 to trigger interferon-gamma/IFN-gamma production of naive CD4 T-cells, binds to the cytokine receptor WSX-1/TCCR which appears to be required but not sufficient for IL-27-mediated signal transduction. IL-27 potentiate the early phase of TH1 response and suppress TH2 and TH17 differentiation. It induces the differentiation of TH1 cells via two distinct pathways, p38 MAPK/TBX21- and ICAM1/ITGAL/ERK-dependent pathways. It also induces STAT1, STAT3, STAT4 and STAT5 phosphorylation and activates TBX21/T-Bet via STAT1 with resulting IL12RB2 up-regulation, an event crucial to TH1 cell commitment. It suppresses the expression of GATA3, the inhibitor TH1 cells development. In CD8 T-cells, it activates STATs as well as GZMB. IL-27 reveals to be a potent inhibitor of TH17 cell development and of IL-17 production. Indeed IL27 alone is also able to inhibit the production of IL17 by CD4 and CD8 T-cells. While IL-27 suppressed the development of pro-inflammatory Th17 cells via STAT1, it inhibits the development of anti-inflammatory inducible regulatory T-cells, iTreg, independently of STAT1. IL-27 also has an effect on cytokine production, it suppresses pro-inflammatory cytokine production such as IL2, IL4, IL5 and IL6 and activates suppressors of cytokine signaling such as SOCS1 and SOCS3. Apart from suppression of cytokine production, IL-27 also antagonizes the effects of some cytokines such as IL6 through direct effects on T-cells. Another important role of IL-27 is its antitumor activity as well as its antiangiogenic activity with activation of production of antiangiogenic chemokines such as IP-10/CXCL10 and MIG/CXCL9. This is Interleukin-27 subunit alpha (Il27) from Mus musculus (Mouse).